Consider the following 153-residue polypeptide: Large ribosomal subunit protein uL30 (153 aa).

The protein belongs to the universal ribosomal protein uL30 family. Part of the 50S ribosomal subunit.

This chain is Large ribosomal subunit protein uL30, found in Methanosarcina mazei (strain ATCC BAA-159 / DSM 3647 / Goe1 / Go1 / JCM 11833 / OCM 88) (Methanosarcina frisia).